We begin with the raw amino-acid sequence, 540 residues long: MAKMLKFGEDARRSMQVGVDKLADTVKVTLGPKGRNVVLDKKFGSPLITNDGVSIAREIELEDPYENMGAQLVKEVATKTNDVAGDGTTTATLLAQAIIREGLKNVTAGANPMLIRNGIRMAVDKAVEEIKKISKPVEGKEDIARVAAISAADEEIGKLIADAMEKVGNEGVITIEESKSMGTELDVVEGMQFDRGYVSPYMSTDTEKMEAVLDNPYILITDKKIGNIQEILPILEQIVQCGKKLLIIAEDIEGEAMATLVVNKLRGTFTCVAVKAPGFGDRRKEMLQDIAILTGGTVIAEELGRDLKEVTLDMLGQAESVKVSKDNTVVVNGKGNPENIKDRISQIKAQIEETSSEFDKEKLQERLAKLAGGVAVIKVGAATETELKERKLRIEDALAATKAAVEEGIVPGGGTAYINVINAVEKLTSDVQDTELGIKIIVKSLEEPLRQIASNAGVEGSVIIEKVKNSEVGTGYDALYGKYVNMIKSGIVDPTKVTRSALQNAASVSATFLTTEAAVAEIPQKEPAMPAPGMGMDGMY.

ATP is bound by residues 29 to 32, 86 to 90, G413, 477 to 479, and D493; these read TLGP, DGTTT, and DAL.

The protein belongs to the chaperonin (HSP60) family. Forms a cylinder of 14 subunits composed of two heptameric rings stacked back-to-back. Interacts with the co-chaperonin GroES.

Its subcellular location is the cytoplasm. It carries out the reaction ATP + H2O + a folded polypeptide = ADP + phosphate + an unfolded polypeptide.. Its function is as follows. Together with its co-chaperonin GroES, plays an essential role in assisting protein folding. The GroEL-GroES system forms a nano-cage that allows encapsulation of the non-native substrate proteins and provides a physical environment optimized to promote and accelerate protein folding. This is Chaperonin GroEL from Clostridium botulinum (strain Alaska E43 / Type E3).